Reading from the N-terminus, the 180-residue chain is ATP synthase subunit delta (180 aa).

It belongs to the ATPase delta chain family. In terms of assembly, F-type ATPases have 2 components, F(1) - the catalytic core - and F(0) - the membrane proton channel. F(1) has five subunits: alpha(3), beta(3), gamma(1), delta(1), epsilon(1). F(0) has three main subunits: a(1), b(2) and c(10-14). The alpha and beta chains form an alternating ring which encloses part of the gamma chain. F(1) is attached to F(0) by a central stalk formed by the gamma and epsilon chains, while a peripheral stalk is formed by the delta and b chains.

The protein resides in the cell inner membrane. Functionally, f(1)F(0) ATP synthase produces ATP from ADP in the presence of a proton or sodium gradient. F-type ATPases consist of two structural domains, F(1) containing the extramembraneous catalytic core and F(0) containing the membrane proton channel, linked together by a central stalk and a peripheral stalk. During catalysis, ATP synthesis in the catalytic domain of F(1) is coupled via a rotary mechanism of the central stalk subunits to proton translocation. In terms of biological role, this protein is part of the stalk that links CF(0) to CF(1). It either transmits conformational changes from CF(0) to CF(1) or is implicated in proton conduction. This Cupriavidus metallidurans (strain ATCC 43123 / DSM 2839 / NBRC 102507 / CH34) (Ralstonia metallidurans) protein is ATP synthase subunit delta.